The primary structure comprises 350 residues: Biotin synthase (350 aa).

Residues 41-268 form the Radical SAM core domain; the sequence is NEVQISRLLS…KSRVRLSAGR (228 aa). [4Fe-4S] cluster-binding residues include Cys-56, Cys-60, and Cys-63. Positions 100, 131, 191, and 263 each coordinate [2Fe-2S] cluster.

The protein belongs to the radical SAM superfamily. Biotin synthase family. As to quaternary structure, homodimer. [4Fe-4S] cluster is required as a cofactor. [2Fe-2S] cluster serves as cofactor.

The catalysed reaction is (4R,5S)-dethiobiotin + (sulfur carrier)-SH + 2 reduced [2Fe-2S]-[ferredoxin] + 2 S-adenosyl-L-methionine = (sulfur carrier)-H + biotin + 2 5'-deoxyadenosine + 2 L-methionine + 2 oxidized [2Fe-2S]-[ferredoxin]. It participates in cofactor biosynthesis; biotin biosynthesis; biotin from 7,8-diaminononanoate: step 2/2. Functionally, catalyzes the conversion of dethiobiotin (DTB) to biotin by the insertion of a sulfur atom into dethiobiotin via a radical-based mechanism. The sequence is that of Biotin synthase from Shewanella sp. (strain ANA-3).